Consider the following 96-residue polypeptide: MEITSVLLKPLLTEKTTMLKDEAQQVAFMVHTQANKLEIKQAVEKAFDVKVEAVNVVRRAPLNRERQGRVVGRKPGWKKAYVTLRQGDKIEFFEGV.

It belongs to the universal ribosomal protein uL23 family. Part of the 50S ribosomal subunit. Contacts protein L29, and trigger factor when it is bound to the ribosome.

In terms of biological role, one of the early assembly proteins it binds 23S rRNA. One of the proteins that surrounds the polypeptide exit tunnel on the outside of the ribosome. Forms the main docking site for trigger factor binding to the ribosome. The chain is Large ribosomal subunit protein uL23 from Desulfovibrio desulfuricans (strain ATCC 27774 / DSM 6949 / MB).